The chain runs to 726 residues: NHL repeat-containing protein 2 (726 aa).

6 NHL repeats span residues 212–254 (KLYK…VWKN), 265–307 (NPGR…IDLE), 335–369 (ISSPWDVVFGRSGPEVQRDNILWIAMAGTHQIWAL), 409–439 (FAQPSGLSLASEGPWSCLFVADSESSTVRTV), 461–505 (AFGD…VDPK), and 518–562 (ASNM…LDLE).

In terms of assembly, monomer.

Its subcellular location is the cytoplasm. The protein resides in the cytosol. Its function is as follows. Required for normal embryonic development. The chain is NHL repeat-containing protein 2 (NHLRC2) from Bos taurus (Bovine).